We begin with the raw amino-acid sequence, 339 residues long: Biotin synthase (339 aa).

Residues 55-282 (NAVQLSTLLS…KAVVRLSAGR (228 aa)) enclose the Radical SAM core domain. Positions 70, 74, and 77 each coordinate [4Fe-4S] cluster. [2Fe-2S] cluster-binding residues include Cys-114, Cys-145, Cys-205, and Arg-277.

It belongs to the radical SAM superfamily. Biotin synthase family. In terms of assembly, homodimer. The cofactor is [4Fe-4S] cluster. [2Fe-2S] cluster is required as a cofactor.

It carries out the reaction (4R,5S)-dethiobiotin + (sulfur carrier)-SH + 2 reduced [2Fe-2S]-[ferredoxin] + 2 S-adenosyl-L-methionine = (sulfur carrier)-H + biotin + 2 5'-deoxyadenosine + 2 L-methionine + 2 oxidized [2Fe-2S]-[ferredoxin]. Its pathway is cofactor biosynthesis; biotin biosynthesis; biotin from 7,8-diaminononanoate: step 2/2. Catalyzes the conversion of dethiobiotin (DTB) to biotin by the insertion of a sulfur atom into dethiobiotin via a radical-based mechanism. The chain is Biotin synthase from Burkholderia ambifaria (strain ATCC BAA-244 / DSM 16087 / CCUG 44356 / LMG 19182 / AMMD) (Burkholderia cepacia (strain AMMD)).